We begin with the raw amino-acid sequence, 139 residues long: Cystatin-1 (139 aa).

The N-terminal stretch at Met1–Pro22 is a signal peptide. The 101-residue stretch at Gly27–Trp127 folds into the Cystatin domain. Positions Gln71–Gly75 match the Secondary area of contact motif. 2 disulfide bridges follow: Cys89–Cys105 and Cys118–Cys138.

This sequence belongs to the cystatin family. As to expression, expressed by the venom gland.

The protein resides in the secreted. Functionally, inhibits various C1 cysteine proteases including cathepsin L, papain and cathepsin B. This protein has no toxic activity and its function in the venom is unknown. It may play a role as housekeeping or regulatory protein. The sequence is that of Cystatin-1 from Crotalus adamanteus (Eastern diamondback rattlesnake).